The chain runs to 130 residues: Small ribosomal subunit protein uS8 (130 aa).

It belongs to the universal ribosomal protein uS8 family. As to quaternary structure, part of the 30S ribosomal subunit. Contacts proteins S5 and S12.

In terms of biological role, one of the primary rRNA binding proteins, it binds directly to 16S rRNA central domain where it helps coordinate assembly of the platform of the 30S subunit. This Pseudoalteromonas translucida (strain TAC 125) protein is Small ribosomal subunit protein uS8.